A 98-amino-acid polypeptide reads, in one-letter code: DNA-binding protein Fis (98 aa).

Residues 74-93 (QTRAALMMGINRGTLRKKLK) constitute a DNA-binding region (H-T-H motif).

This sequence belongs to the transcriptional regulatory Fis family. Homodimer.

In terms of biological role, activates ribosomal RNA transcription. Plays a direct role in upstream activation of rRNA promoters. This is DNA-binding protein Fis from Pectobacterium atrosepticum (strain SCRI 1043 / ATCC BAA-672) (Erwinia carotovora subsp. atroseptica).